We begin with the raw amino-acid sequence, 279 residues long: Probable endonuclease 4 (279 aa).

H69, H109, E145, D179, H182, H216, D229, H231, and E261 together coordinate Zn(2+).

Belongs to the AP endonuclease 2 family. Requires Zn(2+) as cofactor.

The enzyme catalyses Endonucleolytic cleavage to 5'-phosphooligonucleotide end-products.. Endonuclease IV plays a role in DNA repair. It cleaves phosphodiester bonds at apurinic or apyrimidinic (AP) sites, generating a 3'-hydroxyl group and a 5'-terminal sugar phosphate. This Serratia proteamaculans (strain 568) protein is Probable endonuclease 4.